Here is a 142-residue protein sequence, read N- to C-terminus: Small ribosomal subunit protein uS12 (142 aa).

It belongs to the universal ribosomal protein uS12 family. Part of the 30S ribosomal subunit.

Its function is as follows. With S4 and S5 plays an important role in translational accuracy. Located at the interface of the 30S and 50S subunits. This chain is Small ribosomal subunit protein uS12, found in Thermoplasma acidophilum (strain ATCC 25905 / DSM 1728 / JCM 9062 / NBRC 15155 / AMRC-C165).